We begin with the raw amino-acid sequence, 265 residues long: Probable cell division protein kinase ECU08_0230 (265 aa).

The 260-residue stretch at 4–263 (YILGALIGSG…IMEILENEYG (260 aa)) folds into the Protein kinase domain. Residues 10–18 (IGSGTYGEV) and lysine 33 each bind ATP. The Proton acceptor role is filled by aspartate 121.

It belongs to the protein kinase superfamily. CMGC Ser/Thr protein kinase family. CDC2/CDKX subfamily.

The protein resides in the nucleus. It carries out the reaction L-seryl-[protein] + ATP = O-phospho-L-seryl-[protein] + ADP + H(+). The enzyme catalyses L-threonyl-[protein] + ATP = O-phospho-L-threonyl-[protein] + ADP + H(+). Functionally, may play a role in the control of the eukaryotic cell cycle. This chain is Probable cell division protein kinase ECU08_0230, found in Encephalitozoon cuniculi (strain GB-M1) (Microsporidian parasite).